A 94-amino-acid chain; its full sequence is Acylphosphatase (94 aa).

Positions 8–94 (ALHVIVKGRV…RGYTDFRIEV (87 aa)) constitute an Acylphosphatase-like domain. Active-site residues include arginine 23 and asparagine 41.

Belongs to the acylphosphatase family.

It carries out the reaction an acyl phosphate + H2O = a carboxylate + phosphate + H(+). The chain is Acylphosphatase (acyP) from Treponema denticola (strain ATCC 35405 / DSM 14222 / CIP 103919 / JCM 8153 / KCTC 15104).